The sequence spans 1408 residues: MHDVPMETVLAVNPATMIVKECINLCSAMNKQSRDKSQTSVAALLGGGSDIFLSQSDSFVDSFHNLPTSSYHDPLISGLVQLRLKINDLKGLDSLNALELLKPFLEIVSASSVSGYTTSLALDSLQKVFTLKIINKTFNDIQIAVRETVVALTHCRFEASKQISDDSVLLKVVTLLRDIITSSFGDYLSDTIIYDVLQTTLSLACNTQRSEVLRKTAEVTIAGITVKLFTKLKLLDPPTKTEKYINDESYTDNNLKDDIIGTTTSDNDLSSTDDDSAVADDNKNEKPVQQVIREQENDEETAEKAENVEPNYGITVIKDYLGLLLSLVMPENRMKHTTSAMKLSLQLINAAIEISGDKFPLYPRLFSLISDPIFKSVLFIIQSSTQYSLLQATLQLFTSLVVILGDYLPMQIELTLRRIFEILEDTTISGDVSKQKPPAIRELIIEQLSILWIHSPAFFLQLFVNFDCNLDRSDLSIDFIKELTKFSLPAAAVNTSNNIPPICLEGVLSLIENIYNDLQRFDRAEFVKNQKEIDILKQRDRKTEFILCVETFNEKAKKGIQMLIEKGFIDSDSNRDIASFLFLNNGRLNKKTIGLLLCDPKKTSLLKEFIDLFDFKGLRVDEAIRILLTKFRLPGESQQIERIVEAFSSKYSADQSNDKVELEDKKAGKNGSESMTEDDIIHVQPDADSVFVLSYSIIMLNTDSHNPQVKDHMTFDDYSNNLRGCYNGKDFPRWYLHKIYTSIKVKEIVMPEEHHGNERWFEDAWNNLISSTSVMTEMQRDFTNPISKLAQIDILQYEKAIFSNVRDIILKTLFKIFTVASSDQISLRILDAISKCTFINYYFSFDQSYNDTVLHLGEMTTLAQSSAKAVELDVDSIPLVEIFVEDTGSKISVSNQSIRLGQNFKAQLCTVLYFQIIKEISDPSIVSTRLWNQIVQLILKLFENLLMEPNLPFFTNFHSLLKLPELPLPDPDISIRKAKMSRSLLSTFASYLKGDEEPSEEDIDFSIKAFECVKASHPLSSVFENNQLVSPKMIETLLSSLVIEKTSENSPYFEQELLFLLEISIILISEASYGQEFGALIADHMINISNLDGLSKEAIARLASYKMFLVSRFDNPRDILSDLIEHDFLVKNEIFNTKYYESEWGKQVINDLFTHLNDVKYNERALKNVKFWNFLRILISAKDRQFAVYTFLEKYIQNGDIFVDDGNFMNILSLLDEMSCAGAVGTKWEQNYENSVEDGCEAPESNPYRSIIDLSSRSINITADLLSTVGRSNSALNKNEIIAAIQGLAHQCLNPCDELGMQALQALENILLSRASQLRTEKVAVDNLLETGLLPIFELDEIQDVKMKRITSILSVLSKIFLGQLVEGVTSNETFLRVLNVFNKYVDDPTVERQLQELIISKREIEKE.

Phosphoserine is present on Ser49. The segment at 262-287 (TTTSDNDLSSTDDDSAVADDNKNEKP) is disordered. In terms of domain architecture, SEC7 spans 552–706 (FNEKAKKGIQ…IIMLNTDSHN (155 aa)).

As to quaternary structure, interacts (via N-terminal region) with SEC21 (via C-terminus). Interacts with GMH1. Interacts with DRS2.

The protein resides in the cytoplasm. It is found in the cytosol. The protein localises to the membrane. It localises to the endoplasmic reticulum. Its subcellular location is the mitochondrion. Activates the ARF proteins by exchanging bound GDP for free GTP. Plays a role in maintaining mitochondrial morphology, and in the turnover of mitochondria through mitophagy. The chain is ARF guanine-nucleotide exchange factor 1 (GEA1) from Saccharomyces cerevisiae (strain ATCC 204508 / S288c) (Baker's yeast).